A 467-amino-acid polypeptide reads, in one-letter code: Cytochrome P450 76A1 (467 aa).

Heme is bound at residue Cys410.

The protein belongs to the cytochrome P450 family. Heme is required as a cofactor.

In Solanum melongena (Eggplant), this protein is Cytochrome P450 76A1 (CYP76A1).